Consider the following 374-residue polypeptide: MSLMDNWKTDMESYDEGGLVANPNFEVLATFRYDPGFARQSASKKEIFETPDPRLGLRDEDIRQQIINEDYSSYLRVREVNSGGDLLENIQHPDAWKHDCKTIVCQRVEDMLQVIYERFFLLDEQYQRIRIALSYFKIDFSTSLNDLLKLLVENLINCKEGNSEYHEKIQKMINERQCYKMRVLVSKTGDIRIEAIPMPMEPILKLTTDYDSVSTYFIKTMLNGFLIDSTINWDVVVSSEPLNASAFTSFKTTSRDHYARARVRMQTAINNLRGSEPTSSVSQCEILFSNKSGLLMEGSITNVAVIQKDPNGSKKYVTPRLATGCLCGTMRHYLLRLGLIEEGDIDIGSLTVGNEVLLFNGVMGCIKGTVKTKY.

It belongs to the class-IV pyridoxal-phosphate-dependent aminotransferase family. As to quaternary structure, homodimer. Pyridoxal 5'-phosphate is required as a cofactor.

The protein resides in the cytoplasm. The catalysed reaction is 4-amino-4-deoxychorismate = 4-aminobenzoate + pyruvate + H(+). Its pathway is cofactor biosynthesis; tetrahydrofolate biosynthesis; 4-aminobenzoate from chorismate: step 2/2. Converts 4-amino-4-deoxychorismate into 4-aminobenzoate (PABA) and pyruvate. The chain is Aminodeoxychorismate lyase (ABZ2) from Saccharomyces cerevisiae (strain ATCC 204508 / S288c) (Baker's yeast).